Here is a 255-residue protein sequence, read N- to C-terminus: Proteasome subunit alpha (255 aa).

A disordered region spans residues L228 to L255. Residues P232 to L255 are compositionally biased toward low complexity.

It belongs to the peptidase T1A family. The 20S proteasome core is composed of 14 alpha and 14 beta subunits that assemble into four stacked heptameric rings, resulting in a barrel-shaped structure. The two inner rings, each composed of seven catalytic beta subunits, are sandwiched by two outer rings, each composed of seven alpha subunits. The catalytic chamber with the active sites is on the inside of the barrel. Has a gated structure, the ends of the cylinder being occluded by the N-termini of the alpha-subunits. Is capped by the proteasome-associated ATPase, ARC.

It is found in the cytoplasm. The protein operates within protein degradation; proteasomal Pup-dependent pathway. The formation of the proteasomal ATPase ARC-20S proteasome complex, likely via the docking of the C-termini of ARC into the intersubunit pockets in the alpha-rings, may trigger opening of the gate for substrate entry. Interconversion between the open-gate and close-gate conformations leads to a dynamic regulation of the 20S proteasome proteolysis activity. Functionally, component of the proteasome core, a large protease complex with broad specificity involved in protein degradation. The polypeptide is Proteasome subunit alpha (Sanguibacter keddieii (strain ATCC 51767 / DSM 10542 / NCFB 3025 / ST-74)).